The following is a 99-amino-acid chain: Protein translation factor SUI1 homolog (99 aa).

This sequence belongs to the SUI1 family.

The chain is Protein translation factor SUI1 homolog from Picrophilus torridus (strain ATCC 700027 / DSM 9790 / JCM 10055 / NBRC 100828 / KAW 2/3).